Here is a 427-residue protein sequence, read N- to C-terminus: Bifunctional enzyme MtnB/MtnX (427 aa).

Residues 1–221 (MRKPLIICDF…LEETAEVKEW (221 aa)) form an HK-MTPenyl-1-P phosphatase region. An MTRu-1-P dehydratase region spans residues 222 to 427 (MSEQKRQELA…KLKALQAYHV (206 aa)). Zn(2+)-binding residues include histidine 317 and histidine 319.

The protein in the N-terminal section; belongs to the HAD-like hydrolase superfamily. MtnX family. In the C-terminal section; belongs to the aldolase class II family. MtnB subfamily. In terms of assembly, homotetramer. Requires Zn(2+) as cofactor.

It carries out the reaction 5-(methylsulfanyl)-D-ribulose 1-phosphate = 5-methylsulfanyl-2,3-dioxopentyl phosphate + H2O. It catalyses the reaction 2-hydroxy-5-methylsulfanyl-3-oxopent-1-enyl phosphate + H2O = 1,2-dihydroxy-5-(methylsulfanyl)pent-1-en-3-one + phosphate. It participates in amino-acid biosynthesis; L-methionine biosynthesis via salvage pathway; L-methionine from S-methyl-5-thio-alpha-D-ribose 1-phosphate: step 2/6. The protein operates within amino-acid biosynthesis; L-methionine biosynthesis via salvage pathway; L-methionine from S-methyl-5-thio-alpha-D-ribose 1-phosphate: step 4/6. Its function is as follows. Catalyzes the dehydration of methylthioribulose-1-phosphate (MTRu-1-P) into 2,3-diketo-5-methylthiopentyl-1-phosphate (DK-MTP-1-P). In terms of biological role, dephosphorylates 2-hydroxy-3-keto-5-methylthiopentenyl-1-phosphate (HK-MTPenyl-1-P) yielding 1,2-dihydroxy-3-keto-5-methylthiopentene (DHK-MTPene). This Bacillus licheniformis (strain ATCC 14580 / DSM 13 / JCM 2505 / CCUG 7422 / NBRC 12200 / NCIMB 9375 / NCTC 10341 / NRRL NRS-1264 / Gibson 46) protein is Bifunctional enzyme MtnB/MtnX (mtnB/mtnX).